A 250-amino-acid chain; its full sequence is 1-(5-phosphoribosyl)-5-[(5-phosphoribosylamino)methylideneamino] imidazole-4-carboxamide isomerase (250 aa).

D12 (proton acceptor) is an active-site residue. The active-site Proton donor is the D134.

The protein belongs to the HisA/HisF family.

The protein localises to the cytoplasm. The enzyme catalyses 1-(5-phospho-beta-D-ribosyl)-5-[(5-phospho-beta-D-ribosylamino)methylideneamino]imidazole-4-carboxamide = 5-[(5-phospho-1-deoxy-D-ribulos-1-ylimino)methylamino]-1-(5-phospho-beta-D-ribosyl)imidazole-4-carboxamide. It functions in the pathway amino-acid biosynthesis; L-histidine biosynthesis; L-histidine from 5-phospho-alpha-D-ribose 1-diphosphate: step 4/9. The chain is 1-(5-phosphoribosyl)-5-[(5-phosphoribosylamino)methylideneamino] imidazole-4-carboxamide isomerase from Actinobacillus pleuropneumoniae serotype 3 (strain JL03).